The sequence spans 327 residues: Type II methyltransferase M.HhaI (327 aa).

An SAM-dependent MTase C5-type domain is found at 12 to 325 (LRFIDLFAGL…YNIGSSLNFK (314 aa)). Cys81 is a catalytic residue.

Belongs to the class I-like SAM-binding methyltransferase superfamily. C5-methyltransferase family. As to quaternary structure, monomer.

The enzyme catalyses a 2'-deoxycytidine in DNA + S-adenosyl-L-methionine = a 5-methyl-2'-deoxycytidine in DNA + S-adenosyl-L-homocysteine + H(+). Its function is as follows. A methylase, recognizes the double-stranded sequence 5'-GCGC-3', methylates C-2 on both strands, and protects the DNA from cleavage by the HhaI endonuclease. The sequence is that of Type II methyltransferase M.HhaI (hhaIM) from Haemophilus parahaemolyticus.